A 187-amino-acid chain; its full sequence is Peptidyl-tRNA hydrolase (187 aa).

Residue Tyr14 coordinates tRNA. Catalysis depends on His19, which acts as the Proton acceptor. The tRNA site is built by Tyr64 and Asn66.

It belongs to the PTH family. In terms of assembly, monomer.

The protein localises to the cytoplasm. The enzyme catalyses an N-acyl-L-alpha-aminoacyl-tRNA + H2O = an N-acyl-L-amino acid + a tRNA + H(+). Functionally, hydrolyzes ribosome-free peptidyl-tRNAs (with 1 or more amino acids incorporated), which drop off the ribosome during protein synthesis, or as a result of ribosome stalling. Its function is as follows. Catalyzes the release of premature peptidyl moieties from peptidyl-tRNA molecules trapped in stalled 50S ribosomal subunits, and thus maintains levels of free tRNAs and 50S ribosomes. The chain is Peptidyl-tRNA hydrolase from Carboxydothermus hydrogenoformans (strain ATCC BAA-161 / DSM 6008 / Z-2901).